Consider the following 212-residue polypeptide: Uridine kinase (212 aa).

13-20 (GASASGKS) lines the ATP pocket.

The protein belongs to the uridine kinase family.

The protein resides in the cytoplasm. It catalyses the reaction uridine + ATP = UMP + ADP + H(+). The enzyme catalyses cytidine + ATP = CMP + ADP + H(+). The protein operates within pyrimidine metabolism; CTP biosynthesis via salvage pathway; CTP from cytidine: step 1/3. Its pathway is pyrimidine metabolism; UMP biosynthesis via salvage pathway; UMP from uridine: step 1/1. The polypeptide is Uridine kinase (Shewanella halifaxensis (strain HAW-EB4)).